The sequence spans 210 residues: ATP-dependent Clp protease proteolytic subunit (210 aa).

Ser106 serves as the catalytic Nucleophile. His131 is a catalytic residue.

The protein belongs to the peptidase S14 family. In terms of assembly, fourteen ClpP subunits assemble into 2 heptameric rings which stack back to back to give a disk-like structure with a central cavity, resembling the structure of eukaryotic proteasomes.

The protein localises to the cytoplasm. The enzyme catalyses Hydrolysis of proteins to small peptides in the presence of ATP and magnesium. alpha-casein is the usual test substrate. In the absence of ATP, only oligopeptides shorter than five residues are hydrolyzed (such as succinyl-Leu-Tyr-|-NHMec, and Leu-Tyr-Leu-|-Tyr-Trp, in which cleavage of the -Tyr-|-Leu- and -Tyr-|-Trp bonds also occurs).. Its function is as follows. Cleaves peptides in various proteins in a process that requires ATP hydrolysis. Has a chymotrypsin-like activity. Plays a major role in the degradation of misfolded proteins. The chain is ATP-dependent Clp protease proteolytic subunit from Afipia carboxidovorans (strain ATCC 49405 / DSM 1227 / KCTC 32145 / OM5) (Oligotropha carboxidovorans).